The chain runs to 272 residues: Small ribosomal subunit protein uS3 (272 aa).

The region spanning 43 to 111 (IRELMTTGME…QIQLNILEVK (69 aa)) is the KH type-2 domain. The segment at 218–272 (AKEAAQPSGRGRGGERRGGGERRRRNDRAERAPRQENAGAGAETPAAAPAEGGNA) is disordered. Basic and acidic residues predominate over residues 229 to 238 (RGGERRGGGE). A compositionally biased stretch (low complexity) spans 253–272 (ENAGAGAETPAAAPAEGGNA).

It belongs to the universal ribosomal protein uS3 family. Part of the 30S ribosomal subunit. Forms a tight complex with proteins S10 and S14.

In terms of biological role, binds the lower part of the 30S subunit head. Binds mRNA in the 70S ribosome, positioning it for translation. The polypeptide is Small ribosomal subunit protein uS3 (Micrococcus luteus (strain ATCC 4698 / DSM 20030 / JCM 1464 / CCM 169 / CCUG 5858 / IAM 1056 / NBRC 3333 / NCIMB 9278 / NCTC 2665 / VKM Ac-2230) (Micrococcus lysodeikticus)).